A 488-amino-acid chain; its full sequence is UDP-N-acetylmuramate--L-alanine ligase (488 aa).

127 to 133 (GTHGKTT) contributes to the ATP binding site.

It belongs to the MurCDEF family.

The protein localises to the cytoplasm. It catalyses the reaction UDP-N-acetyl-alpha-D-muramate + L-alanine + ATP = UDP-N-acetyl-alpha-D-muramoyl-L-alanine + ADP + phosphate + H(+). The protein operates within cell wall biogenesis; peptidoglycan biosynthesis. In terms of biological role, cell wall formation. In Shewanella baltica (strain OS223), this protein is UDP-N-acetylmuramate--L-alanine ligase.